Reading from the N-terminus, the 616-residue chain is MRALLLLGILLVSLESALLIPPWKDPRKHKVMASEHTVVLTVTGEPCHFPFQYYRQLYYKCIQRGQRGPRPWCATTPNFEKDQRWAYCLEPMKVKDHCNKGNPCQKGGTCVNMPNGPHCICPDHFTGKHCQKEKCFEPQFLQFFQENEIWHRFEPAGVSKCQCKGPKAQCKPVASQVCSTNPCLNGGSCLQTEGHRLCRCPTGYAGRLCDVDLKERCYSDRGLSYRGMAQTTLSGAPCQPWASEATYWNMTAEQALNWGLGDHAFCRNPDNDTRPWCFVWRGDQLSWQYCRLARCQAPIGEAPPILTPTQSPSEHQDSPLLSREPQPTTQTPSQNLTSAWCAPPEQRGPLPSAGLVGCGQRLRKRLSSLNRIVGGLVALPGAHPYIAALYWGQNFCAGSLIAPCWVLTAAHCLQNRPAPEELTVVLGQDRHNQSCEQCQTLAVRSYRLHESYSPKTYQHDLALVRLKETADGCCAHPSPFVQPVCLPRSVASSAEPEGALCEVAGWGHQFEGAEEYSSFLQEAQVPLISPERCSAADVHGAAFTPGMLCAGFLEGGTDACQGDSGGPLVCEDETAERQLVLRGIVSWGSGCGDRLKPGVYTDVANYLAWIQEHTTS.

The signal sequence occupies residues 1 to 19; the sequence is MRALLLLGILLVSLESALL. The Fibronectin type-II domain occupies 42-90; it reads VTGEPCHFPFQYYRQLYYKCIQRGQRGPRPWCATTPNFEKDQRWAYCLE. 13 disulfides stabilise this stretch: Cys47/Cys73, Cys61/Cys88, Cys98/Cys110, Cys104/Cys119, Cys121/Cys130, Cys135/Cys163, Cys161/Cys170, Cys178/Cys189, Cys183/Cys198, Cys200/Cys209, Cys217/Cys295, Cys238/Cys277, and Cys266/Cys290. Positions 94 to 131 constitute an EGF-like 1 domain; that stretch reads VKDHCNKGNPCQKGGTCVNMPNGPHCICPDHFTGKHCQ. The O-linked (Fuc) threonine glycan is linked to Thr109. Residues 133 to 173 enclose the Fibronectin type-I domain; it reads EKCFEPQFLQFFQENEIWHRFEPAGVSKCQCKGPKAQCKPV. Positions 174-210 constitute an EGF-like 2 domain; it reads ASQVCSTNPCLNGGSCLQTEGHRLCRCPTGYAGRLCD. The Kringle domain maps to 216–295; the sequence is RCYSDRGLSY…SWQYCRLARC (80 aa). Asn249, Asn271, and Asn335 each carry an N-linked (GlcNAc...) asparagine glycan. The interval 303–342 is disordered; it reads PPILTPTQSPSEHQDSPLLSREPQPTTQTPSQNLTSAWCA. Positions 325–338 are enriched in polar residues; the sequence is PQPTTQTPSQNLTS. 7 disulfides stabilise this stretch: Cys358-Cys485, Cys396-Cys412, Cys404-Cys474, Cys435-Cys438, Cys501-Cys570, Cys533-Cys549, and Cys560-Cys591. A Peptidase S1 domain is found at 372-615; the sequence is IVGGLVALPG…YLAWIQEHTT (244 aa). Residue His411 is the Charge relay system of the active site. Residue Asn432 is glycosylated (N-linked (GlcNAc...) asparagine). Residue Asp460 is the Charge relay system of the active site. Ser564 (charge relay system) is an active-site residue.

Belongs to the peptidase S1 family. As to quaternary structure, interacts with HRG; the interaction, which is enhanced in the presence of zinc ions and inhibited by heparin-binding, inhibits factor XII autoactivation and contact-initiated coagulation. Post-translationally, O- and N-glycosylated.

The protein localises to the secreted. The catalysed reaction is Selective cleavage of Arg-|-Ile bonds in factor VII to form factor VIIa and factor XI to form factor XIa.. Its activity is regulated as follows. Activity is promoted in the presence of negatively charged surfaces. In terms of biological role, factor XII is a serum glycoprotein that participates in the initiation of blood coagulation, fibrinolysis, and the generation of bradykinin and angiotensin. Prekallikrein is cleaved by factor XII to form kallikrein, which then cleaves factor XII first to alpha-factor XIIa and then trypsin cleaves it to beta-factor XIIa. Alpha-factor XIIa activates factor XI to factor XIa. In Sus scrofa (Pig), this protein is Coagulation factor XII (F12).